The sequence spans 512 residues: Sodium/proline symporter (512 aa).

13 helical membrane passes run 16 to 36, 54 to 74, 85 to 105, 139 to 159, 174 to 194, 200 to 220, 240 to 260, 286 to 306, 327 to 347, 381 to 401, 410 to 430, 438 to 458, and 467 to 487; these read WQTY…GFYG, IGPY…WMIM, LSAM…YFVV, IISG…GFVS, FGLI…GYLA, FFQG…AMMN, LFKG…LGYF, ISWM…GIAF, VLFH…AIMS, FVMI…AIAW, LVGN…LFAL, AGAV…IAWI, and IFGL…TYVV.

Belongs to the sodium:solute symporter (SSF) (TC 2.A.21) family.

Its subcellular location is the cell membrane. It catalyses the reaction L-proline(in) + Na(+)(in) = L-proline(out) + Na(+)(out). Its function is as follows. Catalyzes the sodium-dependent uptake of extracellular L-proline. Since most S.aureus strains are L-proline auxotrophs, this transporter may aid the bacterial persistence during an infection of tissues with low proline concentrations. This is Sodium/proline symporter (putP) from Staphylococcus aureus (strain bovine RF122 / ET3-1).